Consider the following 524-residue polypeptide: Glucose-6-phosphate isomerase (524 aa).

Residue Glu-322 is the Proton donor of the active site. Residues His-351 and Lys-453 contribute to the active site.

It belongs to the GPI family.

It is found in the cytoplasm. The catalysed reaction is alpha-D-glucose 6-phosphate = beta-D-fructose 6-phosphate. Its pathway is carbohydrate biosynthesis; gluconeogenesis. The protein operates within carbohydrate degradation; glycolysis; D-glyceraldehyde 3-phosphate and glycerone phosphate from D-glucose: step 2/4. Catalyzes the reversible isomerization of glucose-6-phosphate to fructose-6-phosphate. This is Glucose-6-phosphate isomerase from Prochlorococcus marinus (strain NATL2A).